Consider the following 373-residue polypeptide: Ribosomal protein uL16 3-hydroxylase (373 aa).

The JmjC domain maps to 92–219 (PTAALMRPFR…LISGFADYVL (128 aa)). Substrate-binding positions include serine 114, 125-127 (HLD), arginine 140, and histidine 187. Histidine 125 and aspartate 127 together coordinate Fe cation. Histidine 187 lines the Fe cation pocket.

Belongs to the ROX family. RoxA/YcfD subfamily. In terms of assembly, homodimer. Fe(2+) serves as cofactor.

It catalyses the reaction L-arginyl-[ribosomal protein uL16] + 2-oxoglutarate + O2 = (3R)-3-hydroxy-L-arginyl-[ribosomal protein uL16] + succinate + CO2. In terms of biological role, growth-regulating oxygenase that catalyzes the hydroxylation of ribosomal protein uL16 on 'Arg-81'. The polypeptide is Ribosomal protein uL16 3-hydroxylase (roxA) (Escherichia coli (strain K12)).